An 87-amino-acid chain; its full sequence is Sodium channel neurotoxin MeuNaTxalpha-5* (87 aa).

The N-terminal stretch at 1 to 19 (MNYLILISFALLVITGVES) is a signal peptide. The region spanning 21-85 (RDAYIAKPHN…VPIRIPGKCH (65 aa)) is the LCN-type CS-alpha/beta domain. Intrachain disulfides connect Cys31/Cys84, Cys35/Cys57, Cys43/Cys67, and Cys47/Cys69. A propeptide spans 86-87 (RR) (removed by a carboxypeptidase).

It belongs to the long (4 C-C) scorpion toxin superfamily. Sodium channel inhibitor family. Alpha subfamily. As to expression, expressed by the venom gland.

It localises to the secreted. Functionally, alpha toxins bind voltage-independently at site-3 of sodium channels (Nav) and inhibit the inactivation of the activated channels, thereby blocking neuronal transmission. This toxin inhibits inactivation of Nav1.6/SCN8A (EC(50)=790 nM) and drosophila DmNav1 (EC(50)=280 nM). The toxin (1 uM) does not significantly shift the midpoint of activation at the two channels, but induces a significant depolarizing shift in the V(1/2) of inactivation of the channels. Has antimicrobial activity. This is Sodium channel neurotoxin MeuNaTxalpha-5* from Mesobuthus eupeus (Lesser Asian scorpion).